A 96-amino-acid polypeptide reads, in one-letter code: Co-chaperonin GroES (96 aa).

Belongs to the GroES chaperonin family. In terms of assembly, heptamer of 7 subunits arranged in a ring. Interacts with the chaperonin GroEL.

Its subcellular location is the cytoplasm. Together with the chaperonin GroEL, plays an essential role in assisting protein folding. The GroEL-GroES system forms a nano-cage that allows encapsulation of the non-native substrate proteins and provides a physical environment optimized to promote and accelerate protein folding. GroES binds to the apical surface of the GroEL ring, thereby capping the opening of the GroEL channel. The sequence is that of Co-chaperonin GroES from Cupriavidus taiwanensis (strain DSM 17343 / BCRC 17206 / CCUG 44338 / CIP 107171 / LMG 19424 / R1) (Ralstonia taiwanensis (strain LMG 19424)).